The sequence spans 232 residues: Ubiquinone biosynthesis O-methyltransferase (232 aa).

Positions 36, 55, 76, and 120 each coordinate S-adenosyl-L-methionine.

This sequence belongs to the methyltransferase superfamily. UbiG/COQ3 family.

The enzyme catalyses a 3-demethylubiquinol + S-adenosyl-L-methionine = a ubiquinol + S-adenosyl-L-homocysteine + H(+). The catalysed reaction is a 3-(all-trans-polyprenyl)benzene-1,2-diol + S-adenosyl-L-methionine = a 2-methoxy-6-(all-trans-polyprenyl)phenol + S-adenosyl-L-homocysteine + H(+). Its pathway is cofactor biosynthesis; ubiquinone biosynthesis. Its function is as follows. O-methyltransferase that catalyzes the 2 O-methylation steps in the ubiquinone biosynthetic pathway. This Pseudomonas putida (strain W619) protein is Ubiquinone biosynthesis O-methyltransferase.